Here is a 371-residue protein sequence, read N- to C-terminus: MRDKIRNARRIVVKVGSALVTNNGAGLDKAAMGDWARQIATLRGAGKQVVLVSSGAIAAGMQRLGWQKRPHEMHKLQAAAAVGQMGLVKAYEDAFSRHNLHTAQILLTHDDLADRKRYLNARSTLTTLLELGVVPIINENDTIVTDEIKFGDNDTLGALVANLIEAHALVILTDQQGLYTADPRRDPNATLVCEGRAEDRSYEAMAGGAGTGISRGGMITKIRAAQRAARSGAHTCIASGNEVDALIRLTQAEPLGTLLYATSSPLQARKQWLADHLQLAGDLILDDGAVVALRSGRSLLPVGVVEVGGEFERGAAVACRSAGGDEIARGLVNYSSSECRRIARKSSTQIEKLLGYIDEPELVHRDNMVLR.

Residue lysine 14 coordinates ATP. Substrate contacts are provided by serine 54, aspartate 141, and asparagine 153. ATP is bound at residue threonine 173 to aspartate 174. Residues alanine 280–isoleucine 357 form the PUA domain.

It belongs to the glutamate 5-kinase family.

The protein localises to the cytoplasm. It carries out the reaction L-glutamate + ATP = L-glutamyl 5-phosphate + ADP. Its pathway is amino-acid biosynthesis; L-proline biosynthesis; L-glutamate 5-semialdehyde from L-glutamate: step 1/2. Functionally, catalyzes the transfer of a phosphate group to glutamate to form L-glutamate 5-phosphate. In Aromatoleum aromaticum (strain DSM 19018 / LMG 30748 / EbN1) (Azoarcus sp. (strain EbN1)), this protein is Glutamate 5-kinase.